Reading from the N-terminus, the 125-residue chain is Ribosome-binding factor A (125 aa).

It belongs to the RbfA family. Monomer. Binds 30S ribosomal subunits, but not 50S ribosomal subunits or 70S ribosomes.

It is found in the cytoplasm. One of several proteins that assist in the late maturation steps of the functional core of the 30S ribosomal subunit. Associates with free 30S ribosomal subunits (but not with 30S subunits that are part of 70S ribosomes or polysomes). Required for efficient processing of 16S rRNA. May interact with the 5'-terminal helix region of 16S rRNA. The sequence is that of Ribosome-binding factor A from Acidovorax sp. (strain JS42).